Consider the following 323-residue polypeptide: L-lactate dehydrogenase (323 aa).

Residues Val-12, Asp-33, and Tyr-65 each coordinate NAD(+). Residues Arg-94 and 126-129 (NPCD) contribute to the substrate site. Residue Thr-149 participates in NAD(+) binding. Position 154-157 (154-157 (ETMR)) interacts with substrate. His-181 (proton acceptor) is an active-site residue. Residue Thr-234 coordinates substrate.

Belongs to the LDH/MDH superfamily. LDH family. Homotetramer.

It localises to the cytoplasm. It catalyses the reaction (S)-lactate + NAD(+) = pyruvate + NADH + H(+). The protein operates within fermentation; pyruvate fermentation to lactate; (S)-lactate from pyruvate: step 1/1. Functionally, catalyzes the conversion of lactate to pyruvate. This Mycoplasmoides gallisepticum (strain R(low / passage 15 / clone 2)) (Mycoplasma gallisepticum) protein is L-lactate dehydrogenase.